The chain runs to 359 residues: Queuine tRNA-ribosyltransferase (359 aa).

Residue Asp-92 is the Proton acceptor of the active site. Substrate-binding positions include 92–96, Asp-146, Gln-189, and Gly-216; that span reads DSGGF. The RNA binding stretch occupies residues 245–251; the sequence is GVGKPAD. The active-site Nucleophile is the Asp-264. The interval 269 to 273 is RNA binding; important for wobble base 34 recognition; it reads TRSGR. Zn(2+)-binding residues include Cys-302, Cys-304, Cys-307, and His-333.

Belongs to the queuine tRNA-ribosyltransferase family. Homodimer. Within each dimer, one monomer is responsible for RNA recognition and catalysis, while the other monomer binds to the replacement base PreQ1. The cofactor is Zn(2+).

The enzyme catalyses 7-aminomethyl-7-carbaguanine + guanosine(34) in tRNA = 7-aminomethyl-7-carbaguanosine(34) in tRNA + guanine. Its pathway is tRNA modification; tRNA-queuosine biosynthesis. Catalyzes the base-exchange of a guanine (G) residue with the queuine precursor 7-aminomethyl-7-deazaguanine (PreQ1) at position 34 (anticodon wobble position) in tRNAs with GU(N) anticodons (tRNA-Asp, -Asn, -His and -Tyr). Catalysis occurs through a double-displacement mechanism. The nucleophile active site attacks the C1' of nucleotide 34 to detach the guanine base from the RNA, forming a covalent enzyme-RNA intermediate. The proton acceptor active site deprotonates the incoming PreQ1, allowing a nucleophilic attack on the C1' of the ribose to form the product. After dissociation, two additional enzymatic reactions on the tRNA convert PreQ1 to queuine (Q), resulting in the hypermodified nucleoside queuosine (7-(((4,5-cis-dihydroxy-2-cyclopenten-1-yl)amino)methyl)-7-deazaguanosine). The chain is Queuine tRNA-ribosyltransferase from Rickettsia bellii (strain RML369-C).